The sequence spans 493 residues: ATP-dependent rRNA helicase RRP3 (493 aa).

Basic and acidic residues-rich tracts occupy residues 26 to 42 (ALENQKKMQAASRKDSE) and 51 to 62 (ERPAKKQAKDEK). The segment at 26-68 (ALENQKKMQAASRKDSESDSSDEEVERPAKKQAKDEKVEEPEE) is disordered. The short motif at 73–101 (ESFAQLNLVPELIQACQNLNFTKPTPIQA) is the Q motif element. A Helicase ATP-binding domain is found at 104 to 276 (IPPALAGSDV…RASLTNPVKC (173 aa)). 117 to 124 (AQTGSGKT) is an ATP binding site. A DEAD box motif is present at residues 223-226 (DEAD). A Helicase C-terminal domain is found at 307 to 453 (LLNEFIGKTV…NIILTLRDSV (147 aa)). The interval 467–493 (RNKEKQARGKGRRGRMMAKENMDREEK) is disordered. Basic and acidic residues predominate over residues 483 to 493 (MAKENMDREEK).

This sequence belongs to the DEAD box helicase family. DDX47/RRP3 subfamily. Interacts with the SSU processome.

It is found in the nucleus. The catalysed reaction is ATP + H2O = ADP + phosphate + H(+). Its function is as follows. ATP-dependent rRNA helicase required for pre-ribosomal RNA processing. Involved in the maturation of the 35S-pre-rRNA and to its cleavage to mature 18S rRNA. The polypeptide is ATP-dependent rRNA helicase RRP3 (Candida glabrata (strain ATCC 2001 / BCRC 20586 / JCM 3761 / NBRC 0622 / NRRL Y-65 / CBS 138) (Yeast)).